The sequence spans 496 residues: Ribose import ATP-binding protein RbsA (496 aa).

ABC transporter domains lie at 3-239 (IVME…VGRE) and 246-493 (ERTP…TGGN). ATP is bound at residue 35 to 42 (GENGAGKS).

It belongs to the ABC transporter superfamily. Ribose importer (TC 3.A.1.2.1) family. The complex is composed of an ATP-binding protein (RbsA), two transmembrane proteins (RbsC) and a solute-binding protein (RbsB).

Its subcellular location is the cell membrane. The catalysed reaction is D-ribose(out) + ATP + H2O = D-ribose(in) + ADP + phosphate + H(+). In terms of biological role, part of the ABC transporter complex RbsABC involved in ribose import. Responsible for energy coupling to the transport system. The polypeptide is Ribose import ATP-binding protein RbsA (Oceanobacillus iheyensis (strain DSM 14371 / CIP 107618 / JCM 11309 / KCTC 3954 / HTE831)).